Here is a 368-residue protein sequence, read N- to C-terminus: MAEKKSQKNTPVKQIDPEQKEKALAAALAQIEKQFGKGSIMKLGDTQALDIEAVSTGSLGLDSALGIGGLPMGRIVEIYGPESSGKTTLTLSVVAQAQKNGKTCAFIDAEHALDPIYARKLGVDTDGLLISQPDNGEQALEICDALVRSGAVDVIIVDSVAALTPKAEIEGDMGDSHMGLQARLMSQALRKLTANIKATNCLVIFINQIRMKIGVMFGNPETTTGGNALKFYASVRLDIRRSGVVKDGDEVIGSETKVKIVKNKVAPPFREVQFDIMYGEGIARMNELLILAESHGFINKAGAWFSYEGEKIGQGKNNAIKWLKEHPEVASKIEQDIRNLLISNPTFTATPDSENADNADDEFSEEEL.

Residue 80-87 (GPESSGKT) coordinates ATP. Positions 344–353 (NPTFTATPDS) are enriched in polar residues. Residues 344–368 (NPTFTATPDSENADNADDEFSEEEL) form a disordered region. The segment covering 354–368 (ENADNADDEFSEEEL) has biased composition (acidic residues).

This sequence belongs to the RecA family.

It is found in the cytoplasm. Its function is as follows. Can catalyze the hydrolysis of ATP in the presence of single-stranded DNA, the ATP-dependent uptake of single-stranded DNA by duplex DNA, and the ATP-dependent hybridization of homologous single-stranded DNAs. It interacts with LexA causing its activation and leading to its autocatalytic cleavage. The protein is Protein RecA of Mannheimia haemolytica (Pasteurella haemolytica).